A 159-amino-acid chain; its full sequence is 2-C-methyl-D-erythritol 2,4-cyclodiphosphate synthase (159 aa).

Aspartate 8 and histidine 10 together coordinate a divalent metal cation. Residues 8 to 10 and 34 to 35 each bind 4-CDP-2-C-methyl-D-erythritol 2-phosphate; these read DVH and HS. Histidine 42 contacts a divalent metal cation. 4-CDP-2-C-methyl-D-erythritol 2-phosphate contacts are provided by residues 56–58, 61–65, 100–106, 132–135, phenylalanine 139, and arginine 142; these read DIG, FPDTD, AQAPKMA, and TTSE.

It belongs to the IspF family. In terms of assembly, homotrimer. A divalent metal cation serves as cofactor.

The catalysed reaction is 4-CDP-2-C-methyl-D-erythritol 2-phosphate = 2-C-methyl-D-erythritol 2,4-cyclic diphosphate + CMP. It participates in isoprenoid biosynthesis; isopentenyl diphosphate biosynthesis via DXP pathway; isopentenyl diphosphate from 1-deoxy-D-xylulose 5-phosphate: step 4/6. Involved in the biosynthesis of isopentenyl diphosphate (IPP) and dimethylallyl diphosphate (DMAPP), two major building blocks of isoprenoid compounds. Catalyzes the conversion of 4-diphosphocytidyl-2-C-methyl-D-erythritol 2-phosphate (CDP-ME2P) to 2-C-methyl-D-erythritol 2,4-cyclodiphosphate (ME-CPP) with a corresponding release of cytidine 5-monophosphate (CMP). In Aliivibrio salmonicida (strain LFI1238) (Vibrio salmonicida (strain LFI1238)), this protein is 2-C-methyl-D-erythritol 2,4-cyclodiphosphate synthase.